The chain runs to 455 residues: N(6)-adenosine-methyltransferase non-catalytic subunit METTL14 (455 aa).

Positions 21-96 (QQLGAESPDS…QHQEESGPYE (76 aa)) are disordered. The span at 37-51 (SKDEQKEIEETRETC) shows a compositional bias: basic and acidic residues. The segment covering 69–82 (EGEDPEEDVEEQKE) has biased composition (acidic residues). Interaction with METTL3 regions lie at residues 134 to 135 (RD) and 236 to 237 (SG). Residues 244–253 (RMCLRKWGFR) are positively charged region required for RNA-binding. 2 interaction with METTL3 regions span residues 254–257 (RCED) and 277–286 (KAVFQRTKEH). Residues 296–297 (RR) form a positively charged region required for RNA-binding region. The tract at residues 307–311 (NVDID) is interaction with METTL3. The disordered stretch occupies residues 392 to 455 (ERLRPKSPPP…GGPHRGFPPR (64 aa)). A compositionally biased stretch (gly residues) spans 407–421 (RGGGAPRGGRGGPAA). Residues 423–441 (RGDRGRERNRPNFRGDRGG) are compositionally biased toward basic and acidic residues.

Belongs to the MT-A70-like family. As to quaternary structure, heterodimer; heterodimerizes with mettl3 to form an antiparallel heterodimer that constitutes an active methyltransferase. Component of the WMM complex, a N6-methyltransferase complex composed of a catalytic subcomplex, named MAC, and of an associated subcomplex, named MACOM. The MAC subcomplex is composed of mettl3 and mettl14.

Its subcellular location is the nucleus. The METTL3-METTL14 heterodimer forms a N6-methyltransferase complex that methylates adenosine residues at the N(6) position of some mRNAs and regulates the circadian clock, differentiation of embryonic stem cells and cortical neurogenesis. In the heterodimer formed with mettl3, mettl14 constitutes the RNA-binding scaffold that recognizes the substrate rather than the catalytic core. N6-methyladenosine (m6A), which takes place at the 5'-[AG]GAC-3' consensus sites of some mRNAs, plays a role in mRNA stability and processing. The protein is N(6)-adenosine-methyltransferase non-catalytic subunit METTL14 (mettl14) of Danio rerio (Zebrafish).